We begin with the raw amino-acid sequence, 942 residues long: Zinc finger protein 865 (942 aa).

Residues 66–106 (FASTSTSKPKEFKVEAPPSSSLSPSKKPDIATTQQFNNQPP) are disordered. Residues 96-106 (ATTQQFNNQPP) are compositionally biased toward polar residues. 20 consecutive C2H2-type zinc fingers follow at residues 172 to 194 (FPCTVCQKSFKQSSHLVQHMLVH), 200 to 222 (YECNTCGRTYNHISSLIRHRRCH), 282 to 304 (FTCTLCWKVFKKQSHLHQHQIIH), 310 to 332 (FSCSVCAKSFNRRESLKRHVKTH), 338 to 360 (VQCEVCGKSFRDTSYLLKHQATH), 367 to 389 (YKCELCGKSYAAPQSLLRHKQVH), 466 to 488 (FCCNVCGRGFGRRETLKRHERIH), 494 to 516 (HQCSVCGKRFRESFHLTKHHVVH), 522 to 544 (YKCELCGKVFGYPQSLTRHKQIH), 564 to 586 (FGCTDCGERFPDSFHLMNHKELH), 592 to 614 (YVCDTCGKCFGFIENLMWHKLVH), 678 to 700 (FSCSICGQSFKHFLGLVTHKYVH), 706 to 728 (LACNVCGQNFAGAYDLLLHRRTH), 734 to 756 (FTCSVCGKRFWEAALLMRHQRCH), 762 to 784 (YRCTICGRGFLHSWYLRQHKVVH), 790 to 812 (YKCALCNKRFAQSSSLAEHQRLH), 818 to 840 (QRCPTCGKTFRYRSNLLEHQRVH), 846 to 868 (YRCDQCGKSFFYISSILRHQRSH), 874 to 896 (LRCSCCLKLFKDPKYFSKHVQTH), and 902 to 924 (FKCGACGEAFSNTYGLKKHRHAH).

The protein belongs to the krueppel C2H2-type zinc-finger protein family.

It is found in the nucleus. May be involved in transcriptional regulation. The chain is Zinc finger protein 865 (znf865) from Xenopus tropicalis (Western clawed frog).